Consider the following 57-residue polypeptide: uncharacterized protein (57 aa).

This is an uncharacterized protein from Methanocaldococcus jannaschii (strain ATCC 43067 / DSM 2661 / JAL-1 / JCM 10045 / NBRC 100440) (Methanococcus jannaschii).